Here is a 246-residue protein sequence, read N- to C-terminus: Transcription factor A, mitochondrial (246 aa).

The transit peptide at 1–42 (MAFLRSMWGVLSALGRSGAAVCIGCGSRLRSPFSFVYLPKCF) directs the protein to the mitochondrion. Residues 50 to 118 (PKKPVSSYLR…VYKEKISRFK (69 aa)) constitute a DNA-binding region (HMG box 1). 3 positions are modified to phosphoserine; by PKA: serine 55, serine 56, and serine 61. Threonine 122 carries the phosphothreonine modification. A DNA-binding region (HMG box 2) is located at residues 155 to 219 (PKRPRSAYNV…RYHNEMKSWE (65 aa)). Phosphoserine; by PKA is present on serine 160. Serine 193 and serine 195 each carry phosphoserine.

As to quaternary structure, monomer; binds DNA as a monomer. Homodimer. Component of the mitochondrial transcription initiation complex, composed at least of TFB2M, TFAM and POLRMT. In this complex TFAM recruits POLRMT to the promoter whereas TFB2M induces structural changes in POLRMT to enable promoter opening and trapping of the DNA non-template strand. Upon metabolic stress, forms a complex composed of FOXO3, SIRT3, TFAM and POLRMT. Interacts with TFB1M and TFB2M. Interacts with CLPX; this enhances DNA-binding. Phosphorylation by PKA within the HMG box 1 impairs DNA binding and promotes degradation by the AAA+ Lon protease.

Its subcellular location is the mitochondrion. The protein resides in the mitochondrion matrix. It localises to the mitochondrion nucleoid. Functionally, binds to the mitochondrial light strand promoter and functions in mitochondrial transcription regulation. Component of the mitochondrial transcription initiation complex, composed at least of TFB2M, TFAM and POLRMT that is required for basal transcription of mitochondrial DNA. In this complex, TFAM recruits POLRMT to a specific promoter whereas TFB2M induces structural changes in POLRMT to enable promoter opening and trapping of the DNA non-template strand. Required for accurate and efficient promoter recognition by the mitochondrial RNA polymerase. Promotes transcription initiation from the HSP1 and the light strand promoter by binding immediately upstream of transcriptional start sites. Is able to unwind DNA. Bends the mitochondrial light strand promoter DNA into a U-turn shape via its HMG boxes. Required for maintenance of normal levels of mitochondrial DNA. May play a role in organizing and compacting mitochondrial DNA. In Trachypithecus cristatus (Silvered leaf-monkey), this protein is Transcription factor A, mitochondrial.